The chain runs to 326 residues: Acetyl-coenzyme A carboxylase carboxyl transferase subunit alpha (326 aa).

Residues 44–298 enclose the CoA carboxyltransferase C-terminal domain; it reads KLETRAMQLR…KQALLDNLDE (255 aa).

This sequence belongs to the AccA family. In terms of assembly, acetyl-CoA carboxylase is a heterohexamer composed of biotin carboxyl carrier protein (AccB), biotin carboxylase (AccC) and two subunits each of ACCase subunit alpha (AccA) and ACCase subunit beta (AccD).

The protein resides in the cytoplasm. The enzyme catalyses N(6)-carboxybiotinyl-L-lysyl-[protein] + acetyl-CoA = N(6)-biotinyl-L-lysyl-[protein] + malonyl-CoA. It participates in lipid metabolism; malonyl-CoA biosynthesis; malonyl-CoA from acetyl-CoA: step 1/1. Functionally, component of the acetyl coenzyme A carboxylase (ACC) complex. First, biotin carboxylase catalyzes the carboxylation of biotin on its carrier protein (BCCP) and then the CO(2) group is transferred by the carboxyltransferase to acetyl-CoA to form malonyl-CoA. The sequence is that of Acetyl-coenzyme A carboxylase carboxyl transferase subunit alpha from Nostoc sp. (strain PCC 7120 / SAG 25.82 / UTEX 2576).